A 142-amino-acid polypeptide reads, in one-letter code: Large ribosomal subunit protein uL13 (142 aa).

This sequence belongs to the universal ribosomal protein uL13 family. As to quaternary structure, part of the 50S ribosomal subunit.

Its function is as follows. This protein is one of the early assembly proteins of the 50S ribosomal subunit, although it is not seen to bind rRNA by itself. It is important during the early stages of 50S assembly. This Thermococcus kodakarensis (strain ATCC BAA-918 / JCM 12380 / KOD1) (Pyrococcus kodakaraensis (strain KOD1)) protein is Large ribosomal subunit protein uL13.